Here is a 203-residue protein sequence, read N- to C-terminus: Glycerol-3-phosphate acyltransferase (203 aa).

Transmembrane regions (helical) follow at residues 3–23 (LASA…AILV), 75–95 (LGLE…GHLF), 113–133 (VILG…LIVA), and 156–176 (LLTG…LIYW).

Belongs to the PlsY family. Probably interacts with PlsX.

The protein resides in the cell inner membrane. It carries out the reaction an acyl phosphate + sn-glycerol 3-phosphate = a 1-acyl-sn-glycero-3-phosphate + phosphate. It functions in the pathway lipid metabolism; phospholipid metabolism. Catalyzes the transfer of an acyl group from acyl-phosphate (acyl-PO(4)) to glycerol-3-phosphate (G3P) to form lysophosphatidic acid (LPA). This enzyme utilizes acyl-phosphate as fatty acyl donor, but not acyl-CoA or acyl-ACP. The chain is Glycerol-3-phosphate acyltransferase from Thioalkalivibrio sulfidiphilus (strain HL-EbGR7).